A 568-amino-acid chain; its full sequence is 2-succinyl-5-enolpyruvyl-6-hydroxy-3-cyclohexene-1-carboxylate synthase (568 aa).

This sequence belongs to the TPP enzyme family. MenD subfamily. Homodimer. Requires Mg(2+) as cofactor. Mn(2+) serves as cofactor. It depends on thiamine diphosphate as a cofactor.

The enzyme catalyses isochorismate + 2-oxoglutarate + H(+) = 5-enolpyruvoyl-6-hydroxy-2-succinyl-cyclohex-3-ene-1-carboxylate + CO2. Its pathway is quinol/quinone metabolism; 1,4-dihydroxy-2-naphthoate biosynthesis; 1,4-dihydroxy-2-naphthoate from chorismate: step 2/7. The protein operates within quinol/quinone metabolism; menaquinone biosynthesis. Functionally, catalyzes the thiamine diphosphate-dependent decarboxylation of 2-oxoglutarate and the subsequent addition of the resulting succinic semialdehyde-thiamine pyrophosphate anion to isochorismate to yield 2-succinyl-5-enolpyruvyl-6-hydroxy-3-cyclohexene-1-carboxylate (SEPHCHC). This Histophilus somni (strain 129Pt) (Haemophilus somnus) protein is 2-succinyl-5-enolpyruvyl-6-hydroxy-3-cyclohexene-1-carboxylate synthase.